Reading from the N-terminus, the 132-residue chain is Small ribosomal subunit protein uS8 (132 aa).

This sequence belongs to the universal ribosomal protein uS8 family. As to quaternary structure, part of the 30S ribosomal subunit. Contacts proteins S5 and S12.

One of the primary rRNA binding proteins, it binds directly to 16S rRNA central domain where it helps coordinate assembly of the platform of the 30S subunit. The sequence is that of Small ribosomal subunit protein uS8 from Francisella tularensis subsp. tularensis (strain FSC 198).